The chain runs to 329 residues: GTPase Obg (329 aa).

In terms of domain architecture, Obg spans 1-159 (MQFIDQARIT…WPLQLELKLL (159 aa)). One can recognise an OBG-type G domain in the interval 160–328 (AEVGIIGLPN…LLDQVWQLLG (169 aa)). ATP is bound by residues 166 to 173 (GLPNAGKS), 191 to 195 (FTTLV), 213 to 216 (DIPG), 280 to 283 (NKLE), and 309 to 311 (SAV). Positions 173 and 193 each coordinate Mg(2+).

This sequence belongs to the TRAFAC class OBG-HflX-like GTPase superfamily. OBG GTPase family. In terms of assembly, monomer. Requires Mg(2+) as cofactor.

It localises to the cytoplasm. An essential GTPase which binds GTP, GDP and possibly (p)ppGpp with moderate affinity, with high nucleotide exchange rates and a fairly low GTP hydrolysis rate. Plays a role in control of the cell cycle, stress response, ribosome biogenesis and in those bacteria that undergo differentiation, in morphogenesis control. This chain is GTPase Obg, found in Synechococcus sp. (strain WH7803).